We begin with the raw amino-acid sequence, 162 residues long: Ubiquitin D (162 aa).

2 consecutive Ubiquitin-like domains span residues 3-78 (SVRT…LKVV) and 87-160 (LFLV…THCT).

Belongs to the ubiquitin D family. As to quaternary structure, interacts directly with the 26S proteasome. Interacts with NUB1; this interaction facilitates the linking of UBD-conjugated target protein to the proteasome complex and accelerates its own degradation and that of its conjugates. Interacts (via ubiquitin-like 1 domain) with the spindle checkpoint protein MAD2L1 during mitosis. Present in aggresomes of proteasome inhibited cells. Interacts with HDAC6 under proteasome impairment conditions. Forms a thioester with UBA6 in cells stimulated with tumor necrosis factor-alpha (TNFa) and interferon-gamma (IFNg). Interacts with SQSTM1 and TP53/p53. Post-translationally, can be acetylated. In terms of tissue distribution, mostly expressed in thymus and intestine.

It is found in the nucleus. The protein localises to the cytoplasm. Functionally, ubiquitin-like protein modifier which can be covalently attached to target proteins and subsequently leads to their degradation by the 26S proteasome, in a NUB1-dependent manner. Conjugation to the target protein is activated by UBA6 via adenylation of its C-terminal glycine. Probably functions as a survival factor. Promotes the expression of the proteasome subunit beta type-9 (PSMB9/LMP2). Regulates TNF-alpha-induced and LPS-mediated activation of the central mediator of innate immunity NF-kappa-B by promoting TNF-alpha-mediated proteasomal degradation of ubiquitinated-I-kappa-B-alpha. Required for TNF-alpha-induced p65 nuclear translocation in renal tubular epithelial cells (RTECs). May be involved in dendritic cell (DC) maturation, the process by which immature dendritic cells differentiate into fully competent antigen-presenting cells that initiate T-cell responses. Mediates mitotic non-disjunction and chromosome instability, in long-term in vitro culture and cancers, by abbreviating mitotic phase and impairing the kinetochore localization of MAD2L1 during the prometaphase stage of the cell cycle. May be involved in the formation of aggresomes when proteasome is saturated or impaired. Mediates apoptosis in a caspase-dependent manner, especially in renal epithelium and tubular cells during renal diseases. This Mus musculus (Mouse) protein is Ubiquitin D (Ubd).